Here is an 81-residue protein sequence, read N- to C-terminus: Small ribosomal subunit protein bS18 (81 aa).

It belongs to the bacterial ribosomal protein bS18 family. As to quaternary structure, part of the 30S ribosomal subunit. Forms a tight heterodimer with protein bS6.

Functionally, binds as a heterodimer with protein bS6 to the central domain of the 16S rRNA, where it helps stabilize the platform of the 30S subunit. The chain is Small ribosomal subunit protein bS18 from Desulfotalea psychrophila (strain LSv54 / DSM 12343).